The sequence spans 111 residues: P antigen family member 2 (111 aa).

The disordered stretch occupies residues 1 to 66 (MSELLRARSQ…NQAVPAFQGP (66 aa)). Over residues 8–24 (RSQSSERGNDQESSQPV) the composition is skewed to polar residues.

It belongs to the GAGE family.

This chain is P antigen family member 2 (PAGE2), found in Homo sapiens (Human).